Reading from the N-terminus, the 374-residue chain is CMP-N-acetylneuraminate-beta-1,4-galactoside alpha-2,3-sialyltransferase (374 aa).

At 1–8 the chain is on the cytoplasmic side; sequence MGLLVFVR. Residues 9–28 traverse the membrane as a helical; Signal-anchor for type II membrane protein segment; that stretch reads NLLLALCLFLVLGFLYYSAW. Residues 29 to 374 lie on the Lumenal side of the membrane; the sequence is KLHLLQWEDS…RVITDLSSGI (346 aa). 2 N-linked (GlcNAc...) asparagine glycosylation sites follow: Asn-79 and Asn-170. A disulfide bond links Cys-159 and Cys-313.

It belongs to the glycosyltransferase 29 family. In terms of tissue distribution, found in all tissues tested. High expression found in brain, liver, kidney, colon, heart and spleen.

The protein resides in the membrane. It localises to the golgi apparatus. The protein localises to the golgi stack membrane. It carries out the reaction a beta-D-galactosyl-(1-&gt;4)-N-acetyl-beta-D-glucosaminyl derivative + CMP-N-acetyl-beta-neuraminate = an N-acetyl-alpha-neuraminyl-(2-&gt;3)-beta-D-galactosyl-(1-&gt;4)-N-acetyl-beta-D-glucosaminyl derivative + CMP + H(+). Its pathway is protein modification; protein glycosylation. Catalyzes the formation of the NeuAc-alpha-2,3-Gal-beta-1,4-GlcNAc-, NeuAc-alpha-2,3-Gal-beta-1,3-GlcNAc- and NeuAc-alpha-2,3-Gal-beta-1,3-GalNAc- sequences found in terminal carbohydrate groups of glycoproteins and glycolipids. The highest activity is toward Gal-beta-1,3-GlcNAc and the lowest toward Gal-beta-1,3-GalNAc. This Mus musculus (Mouse) protein is CMP-N-acetylneuraminate-beta-1,4-galactoside alpha-2,3-sialyltransferase (St3gal3).